The primary structure comprises 238 residues: Purine nucleoside phosphorylase DeoD-type (238 aa).

Residue His5 coordinates a purine D-ribonucleoside. Phosphate-binding positions include Gly21, Arg25, Arg44, and Arg88–Ser91. A purine D-ribonucleoside-binding positions include Glu180–Glu182 and Ser204–Asp205. Catalysis depends on Asp205, which acts as the Proton donor.

It belongs to the PNP/UDP phosphorylase family. In terms of assembly, homohexamer; trimer of homodimers.

It catalyses the reaction a purine D-ribonucleoside + phosphate = a purine nucleobase + alpha-D-ribose 1-phosphate. The catalysed reaction is a purine 2'-deoxy-D-ribonucleoside + phosphate = a purine nucleobase + 2-deoxy-alpha-D-ribose 1-phosphate. In terms of biological role, catalyzes the reversible phosphorolytic breakdown of the N-glycosidic bond in the beta-(deoxy)ribonucleoside molecules, with the formation of the corresponding free purine bases and pentose-1-phosphate. This chain is Purine nucleoside phosphorylase DeoD-type, found in Xenorhabdus nematophila (strain ATCC 19061 / DSM 3370 / CCUG 14189 / LMG 1036 / NCIMB 9965 / AN6).